We begin with the raw amino-acid sequence, 462 residues long: Cysteine--tRNA ligase (462 aa).

A Zn(2+)-binding site is contributed by Cys29. A 'HIGH' region motif is present at residues 31 to 41 (MTVYDLCHLGH). Zn(2+) is bound by residues Cys217, His242, and Glu246. Residues 274 to 278 (KMSKS) carry the 'KMSKS' region motif. Lys277 is a binding site for ATP.

This sequence belongs to the class-I aminoacyl-tRNA synthetase family. In terms of assembly, monomer. Zn(2+) serves as cofactor.

The protein localises to the cytoplasm. The enzyme catalyses tRNA(Cys) + L-cysteine + ATP = L-cysteinyl-tRNA(Cys) + AMP + diphosphate. This Polaromonas sp. (strain JS666 / ATCC BAA-500) protein is Cysteine--tRNA ligase.